A 428-amino-acid chain; its full sequence is MMADKTSPMITSDHSISNFSTGLFGPHPTVPPDVGVVTSSQSQMKDLFGLFCMVTLNLIALLANTGVMVAIARAPHLKKFAFVCHLCAVDVLCAILLMPLGIISSSPFFGTVVFTILECQVYIFLNVFLIWLSILTITAISVERYFYIVHPMRYEVKMTINLVIGVMLLIWFKSLLLALVTLFGWPPYGHQSSIAASHCSLHASHSRLRGVFAVLFCVICFLAPVVVIFSVYSAVYKVARSAALQQVPAVPTWADASPAKDRSDSINSQTTIITTRTLPQRLSPERAFSGGKAALTLAFIVGQFLVCWLPFFIFHLQMSLTGSMKSPGDLEEAVNWLAYSSFAVNPSFYGLLNRQIRDELVKFRRCCVTQPVEIGPSSLEGSFQENFLQFIQRTSSSSETHPSFANSNPRNMENQAHKIPGQIPEEQA.

Over 1 to 46 the chain is Extracellular; that stretch reads MMADKTSPMITSDHSISNFSTGLFGPHPTVPPDVGVVTSSQSQMKD. Asn18 is a glycosylation site (N-linked (GlcNAc...) asparagine). The helical transmembrane segment at 47–67 threads the bilayer; the sequence is LFGLFCMVTLNLIALLANTGV. Residues 68 to 93 are Cytoplasmic-facing; it reads MVAIARAPHLKKFAFVCHLCAVDVLC. A helical membrane pass occupies residues 94–114; the sequence is AILLMPLGIISSSPFFGTVVF. The Extracellular segment spans residues 115–120; sequence TILECQ. The helical transmembrane segment at 121–141 threads the bilayer; the sequence is VYIFLNVFLIWLSILTITAIS. At 142–162 the chain is on the cytoplasmic side; that stretch reads VERYFYIVHPMRYEVKMTINL. Residues 163–183 traverse the membrane as a helical segment; it reads VIGVMLLIWFKSLLLALVTLF. Residues 184 to 210 lie on the Extracellular side of the membrane; that stretch reads GWPPYGHQSSIAASHCSLHASHSRLRG. A helical membrane pass occupies residues 211–231; sequence VFAVLFCVICFLAPVVVIFSV. Residues 232 to 293 lie on the Cytoplasmic side of the membrane; the sequence is YSAVYKVARS…PERAFSGGKA (62 aa). A helical transmembrane segment spans residues 294–314; sequence ALTLAFIVGQFLVCWLPFFIF. At 315 to 428 the chain is on the extracellular side; sequence HLQMSLTGSM…IPGQIPEEQA (114 aa). Positions 398-414 are enriched in polar residues; the sequence is SETHPSFANSNPRNMEN. Positions 398–428 are disordered; it reads SETHPSFANSNPRNMENQAHKIPGQIPEEQA.

This sequence belongs to the G-protein coupled receptor 1 family.

It localises to the cell membrane. The sequence is that of Probable G-protein coupled receptor from Oryzias latipes (Japanese rice fish).